A 1231-amino-acid chain; its full sequence is Cohesin subunit SA-2 (1231 aa).

Met-1 carries the N-acetylmethionine modification. Residues 1-75 are disordered; that stretch reads MIAAPEIPTD…GPNRMNGHHQ (75 aa). Residues 36–48 show a composition bias toward basic residues; that stretch reads KQGKGKTCKKGKK. The SCD domain occupies 293–378; that stretch reads FVHRYRDAIA…SRFKDRIVSM (86 aa). Residue Lys-607 is modified to N6-acetyllysine. Phosphoserine is present on residues Ser-1058, Ser-1061, Ser-1064, and Ser-1065. Residues 1064-1083 form a disordered region; it reads SSRGSTVRSKKSKPSTGKRK. Basic residues predominate over residues 1071–1082; it reads RSKKSKPSTGKR. Thr-1112 carries the post-translational modification Phosphothreonine. Phosphoserine is present on residues Ser-1177 and Ser-1178.

This sequence belongs to the SCC3 family. Interacts directly with RAD21 in cohesin complex. Cohesin complexes are composed of a heterodimer between a SMC1 protein (SMC1A or SMC1B) and SMC3, which are attached via their hinge domain, and RAD21 which link them at their heads, and one STAG protein (STAG1, STAG2 or STAG3). In cohesin complexes, STAG2 is mutually exclusive with STAG1 and STAG3. Phosphorylated by PLK1. The large dissociation of cohesin from chromosome arms during prophase is partly due to its phosphorylation.

It is found in the nucleus. The protein resides in the chromosome. The protein localises to the centromere. Its function is as follows. Component of cohesin complex, a complex required for the cohesion of sister chromatids after DNA replication. The cohesin complex apparently forms a large proteinaceous ring within which sister chromatids can be trapped. At anaphase, the complex is cleaved and dissociates from chromatin, allowing sister chromatids to segregate. The cohesin complex may also play a role in spindle pole assembly during mitosis. This Homo sapiens (Human) protein is Cohesin subunit SA-2 (STAG2).